The chain runs to 388 residues: Succinate--CoA ligase [ADP-forming] subunit beta (388 aa).

The ATP-grasp domain maps to 9 to 244 (KEIFRSMGVA…LEEEDPKEIE (236 aa)). Residues Lys-46, 53-55 (GRG), Glu-99, Cys-102, and Glu-107 each bind ATP. Asn-199 and Asp-213 together coordinate Mg(2+). Residues Asn-264 and 321–323 (GIM) contribute to the substrate site.

It belongs to the succinate/malate CoA ligase beta subunit family. As to quaternary structure, heterotetramer of two alpha and two beta subunits. Mg(2+) is required as a cofactor.

The enzyme catalyses succinate + ATP + CoA = succinyl-CoA + ADP + phosphate. The catalysed reaction is GTP + succinate + CoA = succinyl-CoA + GDP + phosphate. Its pathway is carbohydrate metabolism; tricarboxylic acid cycle; succinate from succinyl-CoA (ligase route): step 1/1. Succinyl-CoA synthetase functions in the citric acid cycle (TCA), coupling the hydrolysis of succinyl-CoA to the synthesis of either ATP or GTP and thus represents the only step of substrate-level phosphorylation in the TCA. The beta subunit provides nucleotide specificity of the enzyme and binds the substrate succinate, while the binding sites for coenzyme A and phosphate are found in the alpha subunit. The chain is Succinate--CoA ligase [ADP-forming] subunit beta from Staphylococcus epidermidis (strain ATCC 35984 / DSM 28319 / BCRC 17069 / CCUG 31568 / BM 3577 / RP62A).